The chain runs to 309 residues: Probable manganese-dependent inorganic pyrophosphatase (309 aa).

Mn(2+) is bound by residues histidine 9, aspartate 13, aspartate 15, aspartate 75, histidine 97, and aspartate 149.

The protein belongs to the PPase class C family. It depends on Mn(2+) as a cofactor.

The protein resides in the cytoplasm. It carries out the reaction diphosphate + H2O = 2 phosphate + H(+). This chain is Probable manganese-dependent inorganic pyrophosphatase, found in Bacillus cereus (strain 03BB102).